The chain runs to 370 residues: Calcium/calmodulin-dependent protein kinase type 1 (370 aa).

The 257-residue stretch at 20–276 (YDFRDVLGTG…CEQALQHPWI (257 aa)) folds into the Protein kinase domain. ATP-binding positions include 26–34 (LGTGAFSEV) and K49. A Glycyl lysine isopeptide (Lys-Gly) (interchain with G-Cter in ubiquitin) cross-link involves residue K59. Residue D141 is the Proton acceptor of the active site. T177 carries the post-translational modification Phosphothreonine; by CaMKK1 and CaMKK2. The segment at 276 to 316 (IAGDTALDKNIHQSVSEQIKKNFAKSKWKQAFNATAVVRHM) is autoinhibitory domain. The tract at residues 296–317 (KNFAKSKWKQAFNATAVVRHMR) is calmodulin-binding. The short motif at 315–321 (HMRKLQL) is the Nuclear export signal element. Phosphoserine is present on S363.

It belongs to the protein kinase superfamily. CAMK Ser/Thr protein kinase family. CaMK subfamily. Monomer. Interacts with XPO1. Interacts with MARK2, ARHGEF7/BETAPIX and GIT1. Phosphorylated by CaMKK1 and CaMKK2 on Thr-177. Post-translationally, polybiquitinated by the E3 ubiquitin-protein ligase complex SCF(FBXL12), leading to proteasomal degradation. As to expression, widely expressed. Expressed in cells of the zona glomerulosa of the adrenal cortex.

Its subcellular location is the cytoplasm. It localises to the nucleus. The enzyme catalyses L-seryl-[protein] + ATP = O-phospho-L-seryl-[protein] + ADP + H(+). It catalyses the reaction L-threonyl-[protein] + ATP = O-phospho-L-threonyl-[protein] + ADP + H(+). Its activity is regulated as follows. Activated by Ca(2+)/calmodulin. Binding of calmodulin results in conformational change that relieves intrasteric autoinhibition and allows phosphorylation of Thr-177 within the activation loop by CaMKK1 or CaMKK2. Phosphorylation of Thr-177 results in several fold increase in total activity. Unlike CaMK4, is unable to exhibit autonomous activity after Ca(2+)/calmodulin activation. Calcium/calmodulin-dependent protein kinase that operates in the calcium-triggered CaMKK-CaMK1 signaling cascade and, upon calcium influx, regulates transcription activators activity, cell cycle, hormone production, cell differentiation, actin filament organization and neurite outgrowth. Recognizes the substrate consensus sequence [MVLIF]-x-R-x(2)-[ST]-x(3)-[MVLIF]. Regulates axonal extension and growth cone motility in hippocampal and cerebellar nerve cells. Upon NMDA receptor-mediated Ca(2+) elevation, promotes dendritic growth in hippocampal neurons and is essential in synapses for full long-term potentiation (LTP) and ERK2-dependent translational activation. Downstream of NMDA receptors, promotes the formation of spines and synapses in hippocampal neurons by phosphorylating ARHGEF7/BETAPIX on 'Ser-694', which results in the enhancement of ARHGEF7 activity and activation of RAC1. Promotes neuronal differentiation and neurite outgrowth by activation and phosphorylation of MARK2 on 'Ser-91', 'Ser-92', 'Ser-93' and 'Ser-294'. Promotes nuclear export of HDAC5 and binding to 14-3-3 by phosphorylation of 'Ser-259' and 'Ser-498' in the regulation of muscle cell differentiation. Regulates NUMB-mediated endocytosis by phosphorylation of NUMB on 'Ser-276' and 'Ser-295'. Involved in the regulation of basal and estrogen-stimulated migration of medulloblastoma cells through ARHGEF7/BETAPIX phosphorylation. Is required for proper activation of cyclin-D1/CDK4 complex during G1 progression in diploid fibroblasts. Plays a role in K(+) and ANG2-mediated regulation of the aldosterone synthase (CYP11B2) to produce aldosterone in the adrenal cortex. Phosphorylates EIF4G3/eIF4GII. In vitro phosphorylates CREB1, ATF1, CFTR, MYL9 and SYN1/synapsin I. The polypeptide is Calcium/calmodulin-dependent protein kinase type 1 (CAMK1) (Homo sapiens (Human)).